Consider the following 181-residue polypeptide: Lysozyme A (181 aa).

The N-terminal stretch at 1-19 is a signal peptide; the sequence is MRIAFFLLVLAVIIGFAYG. Residues 139–181 constitute a propeptide that is removed on maturation; sequence LTDSRPLGPFNVTESEMAQLFIDHEIAMAQCEAEKTCNGFDLE.

Belongs to the dictyostelium lysozyme family. In terms of processing, contains six disulfide bonds.

The protein localises to the cytoplasmic vesicle lumen. It catalyses the reaction Hydrolysis of 1,4-beta-linkages between N-acetylmuramic acid and N-acetyl-D-glucosamine residues in a peptidoglycan.. Its function is as follows. Has antibacterial activity against the Gram-positive bacteria B.subtilis, B.megaterium and M.luteus. No antibacterial activity detected against the Gram-positive bacterium S.aureus or against the Gram-negative bacterium E.coli. Lacks chitinase activity. This is Lysozyme A from Dictyostelium discoideum (Social amoeba).